Here is a 411-residue protein sequence, read N- to C-terminus: Corticotropin-releasing factor receptor 2 (411 aa).

Positions 1-19 form a signal peptide, not cleaved; sequence MDAALLLSLLEANCSLALA. Residues 1–108 are Extracellular-facing; sequence MDAALLLSLL…EPILDDKQRK (108 aa). 5 N-linked (GlcNAc...) asparagine glycosylation sites follow: Asn13, Asn41, Asn74, Asn86, and Asn94. Disulfide bonds link Cys14/Cys50, Cys40/Cys83, and Cys64/Cys98. A helical transmembrane segment spans residues 109–139; sequence YDLHYRIALIVNYLGHCVSVVALVAAFLLFL. Over 140-146 the chain is Cytoplasmic; the sequence is VLRSIRC. Residues 147–171 traverse the membrane as a helical segment; sequence LRNVIHWNLITTFILRNIAWFLLQL. The Extracellular portion of the chain corresponds to 172-185; it reads IDHEVHEGNEVWCR. The cysteines at positions 184 and 254 are disulfide-linked. Residues 186-214 traverse the membrane as a helical segment; the sequence is CITTIFNYFVVTNFFWMFVEGCYLHTAIV. The Cytoplasmic portion of the chain corresponds to 215-221; sequence MTYSTEH. The helical transmembrane segment at 222–249 threads the bilayer; it reads LRKWLFLFIGWCIPCPIIIAWAVGKLYY. The Extracellular segment spans residues 250–265; sequence ENEQCWFGKEAGDLVD. Residues 266-291 traverse the membrane as a helical segment; it reads YIYQGPVMLVLLINFVFLFNIVRILM. At 292-302 the chain is on the cytoplasmic side; that stretch reads TKLRASTTSET. Residues 303–327 traverse the membrane as a helical segment; sequence IQYRKAVKATLVLLPLLGITYMLFF. Topologically, residues 328-334 are extracellular; sequence VNPGEDD. A helical membrane pass occupies residues 335–364; it reads LSQIVFIYFNSFLQSFQGFFVSVFYCFFNG. The Cytoplasmic segment spans residues 365 to 411; that stretch reads EVRAALRKRWHRWQDHHALRVPVARAMSIPTSPTRISFHSIKQTAAV.

This sequence belongs to the G-protein coupled receptor 2 family. As to quaternary structure, monomer. Interacts with CRF, UCN, UCN2 and UCN3. In terms of processing, a N-glycosylation site within the signal peptide impedes its proper cleavage and function. Highly expressed in the heart. Also expressed in lungs, skeletal muscle, gastrointestinal tract, epididymis, and brain.

It localises to the cell membrane. G-protein coupled receptor for CRH (corticotropin-releasing factor), UCN (urocortin), UCN2 and UCN3. Has high affinity for UCN. Ligand binding causes a conformation change that triggers signaling via guanine nucleotide-binding proteins (G proteins) and down-stream effectors, such as adenylate cyclase. Promotes the activation of adenylate cyclase, leading to increased intracellular cAMP levels. This Mus musculus (Mouse) protein is Corticotropin-releasing factor receptor 2 (Crhr2).